An 82-amino-acid chain; its full sequence is Antitoxin MazE8 (82 aa).

As to quaternary structure, forms a complex with cognate toxin MazF8.

Antitoxin component of a type II toxin-antitoxin (TA) system. Its cognate toxin is MazF8. The chain is Antitoxin MazE8 (mazE8) from Mycobacterium tuberculosis (strain ATCC 25618 / H37Rv).